Consider the following 280-residue polypeptide: Urease accessory protein UreD 3 (280 aa).

It belongs to the UreD family. As to quaternary structure, ureD, UreF and UreG form a complex that acts as a GTP-hydrolysis-dependent molecular chaperone, activating the urease apoprotein by helping to assemble the nickel containing metallocenter of UreC. The UreE protein probably delivers the nickel.

The protein localises to the cytoplasm. Functionally, required for maturation of urease via the functional incorporation of the urease nickel metallocenter. The sequence is that of Urease accessory protein UreD 3 from Bradyrhizobium sp. (strain ORS 278).